A 437-amino-acid polypeptide reads, in one-letter code: Epsilon-sarcoglycan (437 aa).

Topologically, residues Met1–Phe317 are extracellular. Residue Asn200 is glycosylated (N-linked (GlcNAc...) asparagine). The helical transmembrane segment at Leu318–Ile338 threads the bilayer. Residues Met339–Pro437 lie on the Cytoplasmic side of the membrane.

This sequence belongs to the sarcoglycan alpha/epsilon family. Post-translationally, N-glycosylated. In terms of processing, ubiquitinated, leading to its degradation by the proteasome. Ubiquitous.

The protein resides in the cell membrane. The protein localises to the sarcolemma. It localises to the cytoplasm. Its subcellular location is the cytoskeleton. It is found in the cell projection. The protein resides in the dendrite. The protein localises to the golgi apparatus. In terms of biological role, component of the sarcoglycan complex, a subcomplex of the dystrophin-glycoprotein complex which forms a link between the F-actin cytoskeleton and the extracellular matrix. The sequence is that of Epsilon-sarcoglycan (SGCE) from Homo sapiens (Human).